Reading from the N-terminus, the 440-residue chain is uncharacterized protein (440 aa).

Transmembrane regions (helical) follow at residues 26–46 (NGLI…SSTF), 59–79 (FVFW…NGVL), 96–116 (FFLG…LKLK), 138–158 (LTLS…SIYL), 211–231 (FLVF…YLFA), 241–261 (LRKP…VGII), 263–283 (WIII…FVIF), 284–304 (WVIK…SLTI), 394–414 (FLII…SVFI), and 418–438 (IVQI…FTFI).

This sequence to M.pneumoniae MPN_087.

The protein resides in the cell membrane. This is an uncharacterized protein from Mycoplasma pneumoniae (strain ATCC 29342 / M129 / Subtype 1) (Mycoplasmoides pneumoniae).